A 243-amino-acid polypeptide reads, in one-letter code: Variant surface antigen E (243 aa).

The signal sequence occupies residues M1 to S29. Residue C30 is the site of N-palmitoyl cysteine attachment. C30 carries S-diacylglycerol cysteine lipidation. The disordered stretch occupies residues T34–K243. Residues G52 to T92 show a composition bias toward low complexity. The span at P93 to K243 shows a compositional bias: polar residues. Tandem repeats lie at residues H97–K109, E110–K122, E123–Q135, H136–K148, E149–Q161, H162–Q174, H175–Q187, H188–Q200, H201–Q213, H214–Q226, and H227–Q239. The segment at H97 to Q239 is 11 X 13 AA tandem repeats.

Its subcellular location is the cell membrane. Responsible for the antigenic diversity for host adaptation. Expression in E.coli of a construct containing vlpD, vlpE, and vlpF yields antigenically distinguishable products corresponding to each gene. In Mesomycoplasma hyorhinis (Mycoplasma hyorhinis), this protein is Variant surface antigen E (vlpE).